The primary structure comprises 385 residues: Hemagglutinin-esterase (385 aa).

An N-terminal signal peptide occupies residues 1-11 (MLIIFLFFNFC). The esterase domain 1 stretch occupies residues 1-121 (MLIIFLFFNF…SNDVWIFNKV (121 aa)). Over 12-361 (YGFNEPLNVV…LNCFYDPLPI (350 aa)) the chain is Virion surface. The Nucleophile role is filled by serine 34. Cysteine 38 and cysteine 59 are oxidised to a cystine. N-linked (GlcNAc...) asparagine; by host glycans are attached at residues asparagine 83, asparagine 110, asparagine 145, asparagine 171, asparagine 196, and asparagine 251. An intrachain disulfide couples cysteine 107 to cysteine 155. Residues 122 to 239 (RFYRALYSNM…GSYKIFSTGF (118 aa)) form a receptor binding region. Intrachain disulfides connect cysteine 183–cysteine 249 and cysteine 191–cysteine 222. An esterase domain 2 region spans residues 240-352 (VLSIPTKALC…NCPTSAYIKL (113 aa)). Cysteine 280 and cysteine 285 are joined by a disulfide. N-linked (GlcNAc...) asparagine; by host glycosylation occurs at asparagine 289. Residues aspartate 299 and histidine 302 each act as charge relay system in the active site. A disulfide bridge connects residues cysteine 320 and cysteine 344. N-linked (GlcNAc...) asparagine; by host glycosylation is present at asparagine 331. Residues 362 to 382 (ILQGILLFLALLFIVFLLFLV) form a helical membrane-spanning segment. At 383–385 (YHG) the chain is on the intravirion side.

It belongs to the influenza type C/coronaviruses hemagglutinin-esterase family. As to quaternary structure, homodimer; disulfide-linked. Forms a complex with the M protein in the pre-Golgi. Associates then with S-M complex to form a ternary complex S-M-HE. Post-translationally, N-glycosylated in the host RER.

The protein localises to the virion membrane. It localises to the host cell membrane. The catalysed reaction is N-acetyl-9-O-acetylneuraminate + H2O = N-acetylneuraminate + acetate + H(+). It carries out the reaction N-acetyl-4-O-acetylneuraminate + H2O = N-acetylneuraminate + acetate + H(+). In terms of biological role, structural protein that makes short spikes at the surface of the virus. Contains receptor binding and receptor-destroying activities. Mediates de-O-acetylation of N-acetyl-4-O-acetylneuraminic acid, which is probably the receptor determinant recognized by the virus on the surface of erythrocytes and susceptible cells. This receptor-destroying activity is important for virus release as it probably helps preventing self-aggregation and ensures the efficient spread of the progeny virus from cell to cell. May serve as a secondary viral attachment protein for initiating infection, the spike protein being the major one. May become a target for both the humoral and the cellular branches of the immune system. The protein is Hemagglutinin-esterase of Human coronavirus HKU1 (isolate N2) (HCoV-HKU1).